We begin with the raw amino-acid sequence, 78 residues long: Large ribosomal subunit protein bL28 (78 aa).

A disordered region spans residues 1–21 (MSRVCQVTGKRPVSGNNRSHA).

This sequence belongs to the bacterial ribosomal protein bL28 family.

This is Large ribosomal subunit protein bL28 from Yersinia enterocolitica serotype O:8 / biotype 1B (strain NCTC 13174 / 8081).